Consider the following 1575-residue polypeptide: Chromatin-remodeling ATPase INO80 (1575 aa).

Disordered stretches follow at residues 33–57, 71–116, and 239–490; these read PSKA…TGNT, LNDE…KKPL, and KNKE…TSKE. Low complexity-rich tracts occupy residues 42–57 and 100–109; these read LPKQ…TGNT and QEPTQPTNNT. Composition is skewed to basic and acidic residues over residues 239–250 and 258–276; these read KNKEIIHIDHSK and RGKE…VESK. A compositionally biased stretch (low complexity) spans 285 to 297; the sequence is NSETNNSRSTVSS. The span at 322–343 shows a compositional bias: polar residues; sequence KGTNLSSSSGPITDITNDSNNV. Low complexity predominate over residues 364–379; the sequence is NGNNIDSNSTDNNNRN. Composition is skewed to basic residues over residues 387–396 and 414–425; these read GPKRIRIKLK and KGRGKGKGKGKG. Composition is skewed to low complexity over residues 441–467 and 475–488; these read NANG…AAAA and GSAL…SSTS. A DBINO domain is found at 505-630; that stretch reads IWKDMSRKDG…SHFIGKKIKT (126 aa). A disordered region spans residues 690 to 718; the sequence is NAQNQAKQFDDTEPFKNPDTNGEEMNFQN. A Helicase ATP-binding domain is found at 749 to 921; sequence ANLYEQGING…WALLHFIMPT (173 aa). Residue 762-769 participates in ATP binding; it reads DEMGLGKT. The DEAQ box motif lies at 872–875; that stretch reads DEAQ. A Helicase C-terminal domain is found at 1315–1470; it reads KLDELLVKLK…GKATTIMSKK (156 aa). The span at 1488 to 1498 shows a compositional bias: gly residues; sequence SGDGDGDGTGV. The interval 1488-1549 is disordered; it reads SGDGDGDGTG…EEDGEEEDAL (62 aa). The span at 1505-1514 shows a compositional bias: polar residues; that stretch reads SNDVSKSTTP.

The protein belongs to the SNF2/RAD54 helicase family. As to quaternary structure, component of the INO80 chromatin-remodeling complex.

It is found in the nucleus. It carries out the reaction ATP + H2O = ADP + phosphate + H(+). In terms of biological role, ATPase component of the INO80 complex which remodels chromatin by shifting nucleosomes and is involved in DNA repair. In Lodderomyces elongisporus (strain ATCC 11503 / CBS 2605 / JCM 1781 / NBRC 1676 / NRRL YB-4239) (Yeast), this protein is Chromatin-remodeling ATPase INO80 (INO80).